A 480-amino-acid chain; its full sequence is Ribosome assembly protein rrb1 (480 aa).

2 disordered regions span residues 1-78 and 155-176; these read MSKR…WLPG and QHDENDDASDNSDVEEDPILEH. Composition is skewed to acidic residues over residues 28–52 and 158–172; these read VDTEMGEFEDAYEDEIESEEEYIEA and ENDDASDNSDVEEDP. 2 positions are modified to phosphoserine: S163 and S166. WD repeat units follow at residues 183–225, 289–329, 334–375, 385–425, and 446–480; these read GACN…RSLD, SHTA…KTSA, AHPG…SSSS, WHRA…DEEE, and MGQQEIKEMHWHRQIPGTIVSTAMTGINVFKTITF.

As to quaternary structure, associates with ribosomal protein L3.

The protein resides in the cytoplasm. Its subcellular location is the nucleus. It is found in the nucleolus. Its function is as follows. Involved in regulation of L3 expression and stability and plays a role in early 60S ribosomal subunit assembly. May be required for proper assembly of pre-ribosomal particles during early ribosome biogenesis, presumably by targeting L3 onto the 35S precursor rRNA. In Schizosaccharomyces pombe (strain 972 / ATCC 24843) (Fission yeast), this protein is Ribosome assembly protein rrb1 (rrb1).